The primary structure comprises 193 residues: Lipopolysaccharide core heptose(II)-phosphate phosphatase (193 aa).

The signal sequence occupies residues 1 to 25 (MKLKKHVAVLLISFLCLIGLVTQHA).

It belongs to the phosphoglycerate mutase family. Ais subfamily.

It localises to the periplasm. It participates in bacterial outer membrane biogenesis; lipopolysaccharide metabolism. Catalyzes the dephosphorylation of heptose(II) of the outer membrane lipopolysaccharide core. This Escherichia fergusonii (strain ATCC 35469 / DSM 13698 / CCUG 18766 / IAM 14443 / JCM 21226 / LMG 7866 / NBRC 102419 / NCTC 12128 / CDC 0568-73) protein is Lipopolysaccharide core heptose(II)-phosphate phosphatase.